The following is a 261-amino-acid chain: UPF0328 protein ECU03_1620 (261 aa).

The protein belongs to the UPF0328 family.

In Encephalitozoon cuniculi (strain GB-M1) (Microsporidian parasite), this protein is UPF0328 protein ECU03_1620.